The primary structure comprises 400 residues: Spaetzle-processing enzyme (400 aa).

A signal peptide spans M1–A27. A Clip domain is found at S34 to C94. Cystine bridges form between C35/C93, C46/C77, C52/C94, C127/C269, C166/C182, and C211/C221. Residues I135–E399 form the Peptidase S1 domain. N140 carries N-linked (GlcNAc...) asparagine glycosylation. H181 (charge relay system) is an active-site residue. Ca(2+)-binding residues include E202, D204, T207, and D210. The active-site Charge relay system is the D249. N311 carries N-linked (GlcNAc...) asparagine glycosylation. 2 disulfide bridges follow: C315/C332 and C342/C375. S346 serves as the catalytic Charge relay system.

It belongs to the peptidase S1 family. CLIP subfamily. In terms of assembly, in the active form, heterodimer of a light chain and a heavy chain; disulfide-linked. Post-translationally, proteolytically cleaved in response to Gram-negative bacterial or fungal infection; processing is likely to result in its activation. Cleavage produces a light chain containing the CLIP domain and a catalytic heavy chain which remain covalently associated through an interchain disulfide bond.

The protein localises to the secreted. In terms of biological role, endopeptidase which plays a key role in innate immunity by cleaving Tl ligand spz and thereby activating the Toll pathway in response to fungal and Gram-positive bacterial infections. Acts downstream of pathogen recognition receptors PGRP-SA and GNBP1 and protease grass in response to Gram-positive bacterial infection. Acts downstream of protease psh in response to fungal infection. This Drosophila melanogaster (Fruit fly) protein is Spaetzle-processing enzyme.